Here is a 350-residue protein sequence, read N- to C-terminus: Ornithine cyclodeaminase (350 aa).

Residues arginine 45 and lysine 69 each coordinate L-ornithine. NAD(+) is bound by residues threonine 84, arginine 112, 139–140 (AQ), aspartate 161, threonine 202, 225–228 (VGGD), lysine 232, and serine 293. Arginine 112 serves as a coordination point for L-ornithine. Aspartate 228 contacts L-ornithine. Aspartate 228 acts as the Proton donor/acceptor in catalysis. L-ornithine is bound at residue valine 294. Position 331 (lysine 331) interacts with NAD(+).

The protein belongs to the ornithine cyclodeaminase/mu-crystallin family. Homodimer. NAD(+) is required as a cofactor.

The enzyme catalyses L-ornithine = L-proline + NH4(+). Its pathway is amino-acid biosynthesis; L-proline biosynthesis; L-proline from L-ornithine: step 1/1. In terms of biological role, catalyzes the conversion of L-ornithine into L-proline with release of ammonia. Is likely involved in the L-ornithine degradation pathway that allows P.putida to utilize this compound as sole carbon and nitrogen source. This is Ornithine cyclodeaminase from Pseudomonas putida (strain ATCC 47054 / DSM 6125 / CFBP 8728 / NCIMB 11950 / KT2440).